A 333-amino-acid polypeptide reads, in one-letter code: Nucleoid-associated protein VC0395_A1624/VC395_2154 (333 aa).

It belongs to the YejK family.

The protein resides in the cytoplasm. Its subcellular location is the nucleoid. The protein is Nucleoid-associated protein VC0395_A1624/VC395_2154 of Vibrio cholerae serotype O1 (strain ATCC 39541 / Classical Ogawa 395 / O395).